The chain runs to 230 residues: Broad specificity amino-acid racemase YgeA (230 aa).

Substrate is bound by residues M10, Q52, and 83–85 (TNT). The Proton donor role is filled by T83. Catalysis depends on C197, which acts as the Proton acceptor. 198–199 (TE) provides a ligand contact to substrate.

This sequence belongs to the aspartate/glutamate racemases family.

The enzyme catalyses an L-alpha-amino acid = a D-alpha-amino acid. It carries out the reaction L-homoserine = D-homoserine. Its function is as follows. Amino-acid racemase able to utilize a broad range of substrates. Highest activity is observed with L-homoserine and D-homoserine. Has tenfold lower activity against L-methionine, L-leucine, L-valine and L-histidine. Has low activity with L-norvaline, L-asparagine, D-methionine, L-aminobutyric acid, L-isoleucine, L-serine, L-norleucine, L-alanine, L-glutamine, LL-diaminopimelic acid and L-phenylalanine. Has no activity against ten L-amino acids (Thr, Glu, Asp, Arg, Lys, Tyr, Trp, Orn, Cit and Aad). D-amino acids might be used as components of peptidoglycan and/or be involved in peptidoglycan metabolism and remodeling. The polypeptide is Broad specificity amino-acid racemase YgeA (ygeA) (Escherichia coli (strain K12)).